The following is a 228-amino-acid chain: DNA-binding response regulator MtrA (228 aa).

One can recognise a Response regulatory domain in the interval 7 to 120 (RILVVDDDPS…ELVARVRARL (114 aa)). Aspartate 56 bears the 4-aspartylphosphate mark. A DNA-binding region (ompR/PhoB-type) is located at residues 128 to 227 (AEMLSIGDVE…VRGVGYKAGP (100 aa)).

As to quaternary structure, probably a monomer when inactive, phosphorylation may permit it to oligomerize. The monomeric form does not seem to be phosphorylated. In terms of processing, phosphorylated by MtrB.

Its subcellular location is the cytoplasm. In terms of biological role, member of the two-component regulatory system MtrA/MtrB, responding to environmental signals. Controls expression of a number of genes including dnaA, ripA, fbpB and probably itself. Probably plays a role in cell division. The polypeptide is DNA-binding response regulator MtrA (mtrA) (Mycolicibacterium smegmatis (strain ATCC 700084 / mc(2)155) (Mycobacterium smegmatis)).